Consider the following 206-residue polypeptide: Ephrin-A4 (206 aa).

An N-terminal signal peptide occupies residues 1 to 25; the sequence is MRLLPLLRTVLWAALLGSRLPGCSS. The Ephrin RBD domain occupies 26 to 158; that stretch reads LRHPIYWNSS…RLQVSVCCKE (133 aa). The N-linked (GlcNAc...) asparagine glycan is linked to asparagine 33. The Cell attachment site motif lies at 41-43; that stretch reads RGD. Cystine bridges form between cysteine 58-cysteine 99 and cysteine 86-cysteine 147. Asparagine 98 carries N-linked (GlcNAc...) asparagine glycosylation. Positions 161-180 are disordered; it reads SSHESAHPVGSPGESGTSGW. The GPI-anchor amidated serine moiety is linked to residue serine 175. The propeptide at 176–206 is removed in mature form; it reads GTSGWRGGHAPSPLCLLLLLLLPILRLLRVL.

This sequence belongs to the ephrin family. As to expression, expressed in myogenic progenitor cells.

The protein localises to the cell membrane. In terms of biological role, cell surface GPI-bound ligand for Eph receptors, a family of receptor tyrosine kinases which are crucial for migration, repulsion and adhesion during neuronal, vascular and epithelial development. Binds promiscuously Eph receptors residing on adjacent cells, leading to contact-dependent bidirectional signaling into neighboring cells. May play a role in the interaction between activated B-lymphocytes and dendritic cells in tonsils. The sequence is that of Ephrin-A4 (Efna4) from Mus musculus (Mouse).